Here is a 319-residue protein sequence, read N- to C-terminus: Geranylgeranyl pyrophosphate synthase (319 aa).

K42, R45, and H74 together coordinate isopentenyl diphosphate. The Mg(2+) site is built by D81 and D85. Position 90 (R90) interacts with dimethylallyl diphosphate. Residue R91 coordinates isopentenyl diphosphate. Dimethylallyl diphosphate contacts are provided by K172, T173, Q210, K226, and K236.

Belongs to the FPP/GGPP synthase family. Homodimer. Mg(2+) is required as a cofactor.

It carries out the reaction isopentenyl diphosphate + dimethylallyl diphosphate = (2E)-geranyl diphosphate + diphosphate. The catalysed reaction is isopentenyl diphosphate + (2E)-geranyl diphosphate = (2E,6E)-farnesyl diphosphate + diphosphate. It catalyses the reaction isopentenyl diphosphate + (2E,6E)-farnesyl diphosphate = (2E,6E,10E)-geranylgeranyl diphosphate + diphosphate. It participates in isoprenoid biosynthesis; geranyl diphosphate biosynthesis; geranyl diphosphate from dimethylallyl diphosphate and isopentenyl diphosphate: step 1/1. Its pathway is isoprenoid biosynthesis; farnesyl diphosphate biosynthesis; farnesyl diphosphate from geranyl diphosphate and isopentenyl diphosphate: step 1/1. It functions in the pathway isoprenoid biosynthesis; geranylgeranyl diphosphate biosynthesis; geranylgeranyl diphosphate from farnesyl diphosphate and isopentenyl diphosphate: step 1/1. Catalyzes the addition of 3 molecules of isopentenyl diphosphate (IPP) onto dimethylallyl diphosphate (DMAPP) to form geranylgeranyl pyrophosphate (GGPP). Catalyzes the synthesis of geranylgeranyl pyrophosphate as a major product and of farnesyl pyrophosphate in smaller amounts. The protein is Geranylgeranyl pyrophosphate synthase of Geoglobus acetivorans.